The following is a 678-amino-acid chain: Protein CASP (678 aa).

Over 1 to 619 (MAANVGSMSQ…LILSNKTART (619 aa)) the chain is Cytoplasmic. 4 coiled-coil regions span residues 16-40 (DLQQLQRELDAAATVLANRQDESEQ), 67-374 (LLKS…TLKS), 427-454 (HLTEATAKAVEQKELIARLEQDLSTIQS), and 502-556 (LSII…FLQS). Ser-586 carries the post-translational modification Phosphoserine. Residues 620 to 640 (IGFFYTLFLHCLVFLVLYKLA) form a helical; Anchor for type IV membrane protein membrane-spanning segment. Over 641-678 (WSESVERDCAATCAKKFADHLHKFHESDNGAAAGDLWQ) the chain is Lumenal.

The protein belongs to the CASP family. Homodimer; disulfide-linked. Interacts with GOLGA5. In terms of tissue distribution, ubiquitously expressed.

It localises to the golgi apparatus membrane. Functionally, may be involved in intra-Golgi retrograde transport. This is Protein CASP (Cux1) from Mus musculus (Mouse).